The following is a 382-amino-acid chain: ADP,ATP carrier protein, mitochondrial (382 aa).

The transit peptide at 1–71 (MAEQANQPTV…PMMSSSPIFA (71 aa)) directs the protein to the mitochondrion. Solcar repeat units lie at residues 80–173 (KNFM…FKRL), 185–277 (KWFG…LKPV), and 285–371 (DNFF…LQIL). Transmembrane regions (helical) follow at residues 82-109 (FMIDFLMGGVSAAVSKTAAAPIERVKLL), 150-174 (TANVIRYFPTQALNFAFKDYFKRLF), 183-203 (YWKWFGGNLASGGAAGASSLF), 253-274 (FNISCVGIIVYRGLYFGMYDSL), and 288-308 (FASFALGWLITNGAGLASYPI). Positions 155 and 167 each coordinate ADP. Residue R312 coordinates ADP. The segment at 312-317 (RRRMMM) is important for transport activity. The Nucleotide carrier signature motif motif lies at 312 to 317 (RRRMMM). The chain crosses the membrane as a helical span at residues 348–368 (AGANILRAIAGAGVLSGYDQL).

Belongs to the mitochondrial carrier (TC 2.A.29) family. As to quaternary structure, monomer.

The protein resides in the mitochondrion inner membrane. The enzyme catalyses ADP(in) + ATP(out) = ADP(out) + ATP(in). With respect to regulation, the matrix-open state (m-state) is inhibited by the membrane-permeable bongkrekic acid (BKA). The cytoplasmic-open state (c-state) is inhibited by the membrane-impermeable toxic inhibitor carboxyatractyloside (CATR). ADP:ATP antiporter that mediates import of ADP into the mitochondrial matrix for ATP synthesis, and export of ATP out to fuel the cell. Cycles between the cytoplasmic-open state (c-state) and the matrix-open state (m-state): operates by the alternating access mechanism with a single substrate-binding site intermittently exposed to either the cytosolic (c-state) or matrix (m-state) side of the inner mitochondrial membrane. The polypeptide is ADP,ATP carrier protein, mitochondrial (Oryza sativa subsp. japonica (Rice)).